A 145-amino-acid polypeptide reads, in one-letter code: Large ribosomal subunit protein bL9 (145 aa).

This sequence belongs to the bacterial ribosomal protein bL9 family.

In terms of biological role, binds to the 23S rRNA. The polypeptide is Large ribosomal subunit protein bL9 (Mesomycoplasma hyopneumoniae (strain 7448) (Mycoplasma hyopneumoniae)).